The following is a 122-amino-acid chain: Large ribosomal subunit protein bL20c (122 aa).

It belongs to the bacterial ribosomal protein bL20 family.

It localises to the plastid. It is found in the chloroplast. Functionally, binds directly to 23S ribosomal RNA and is necessary for the in vitro assembly process of the 50S ribosomal subunit. It is not involved in the protein synthesizing functions of that subunit. This is Large ribosomal subunit protein bL20c from Dioscorea elephantipes (Elephant's foot yam).